The following is a 206-amino-acid chain: Putative cryptic phosphonate transport system permease protein PhnE1 (206 aa).

3 consecutive transmembrane segments (helical) span residues 30-50, 92-112, and 137-157; these read WFSL…WQGA, IAVW…LMSA, and MVFA…GVLA.

In terms of assembly, if the reading frame is restored, the complex is composed of two ATP-binding proteins (PhnC), two transmembrane proteins (PhnE) and a solute-binding protein (PhnD).

It is found in the cell inner membrane. Functionally, N-terminal fragment of the PhnE protein, part of a phosphonate usage operon that is cryptic in K12 strains. Growth of K12 strains on phosphonate can be observed when it is used as the sole phosphorus source after a 60 hour lag period, suggesting the operon is activated. An intact PhnE in strain B is (AC A0A140NFA3). Part of the binding-protein-dependent transport system for phosphonates; probably responsible for the translocation of the substrate across the membrane. This chain is Putative cryptic phosphonate transport system permease protein PhnE1 (phnE1), found in Escherichia coli (strain K12).